The chain runs to 33 residues: Imperacalcin (33 aa).

Cystine bridges form between C3-C17, C10-C21, and C16-C32. Important for stimulation of [3H]ryanodine binding to RYR1 stretches follow at residues 8–9 and 19–20; these read KR and KK. Positions 22–24 are essential for stimulation of [3H]ryanodine binding to RYR1; the sequence is KRR. The important for stimulation of [3H]ryanodine binding to RYR1 stretch occupies residues 25–27; that stretch reads GTN.

It belongs to the scorpion calcin family. As to expression, expressed by the venom gland.

It localises to the secreted. Functionally, this toxin affects the activity of ryanodine receptors 1, 2 and 3 (RyR1, RyR2 and RyR3). At lower concentrations the toxin increases full openings of the RyRs, and at higher concentrations it inhibits full openings and induces openings to subconductance levels (30% of the full conductance state) and reduces the number of full conductance openings. The different actions may be attributed to the toxins binding at different sites on the RyRs, with binding at a high-affinity site mediating the increase in full openings and the induction of subconductance states evoked upon binding to a lower-affinity site. Furthermore, it triggers calcium release from sarcoplasmic vesicles (11.7 nM are enough to induce a sharp release, and 70% of the total calcium is released after toxin (100 nM) addition) probably by acting as a cell-penetrating peptide (CPP). In addition, it has been shown to dose-dependently stimulate ryanodine binding to RyR1 (EC(50)=8.7 nM). It also augments the bell-shaped calcium-[3H]ryanodine binding curve that is maximal at about 10 uM calcium concentration. It binds a different site as ryanodine. It acts synergistically with caffeine. In vivo, intracerebroventricular injection into mice induces neurotoxic symptoms, followed by death. This chain is Imperacalcin, found in Pandinus imperator (Emperor scorpion).